Reading from the N-terminus, the 302-residue chain is Sulfate adenylyltransferase subunit 2 (302 aa).

Residues 280 to 302 are disordered; the sequence is RQGRAIDHDQSGSMELKKRQGYF.

It belongs to the PAPS reductase family. CysD subfamily. As to quaternary structure, heterodimer composed of CysD, the smaller subunit, and CysN.

The enzyme catalyses sulfate + ATP + H(+) = adenosine 5'-phosphosulfate + diphosphate. Its pathway is sulfur metabolism; hydrogen sulfide biosynthesis; sulfite from sulfate: step 1/3. Functionally, with CysN forms the ATP sulfurylase (ATPS) that catalyzes the adenylation of sulfate producing adenosine 5'-phosphosulfate (APS) and diphosphate, the first enzymatic step in sulfur assimilation pathway. APS synthesis involves the formation of a high-energy phosphoric-sulfuric acid anhydride bond driven by GTP hydrolysis by CysN coupled to ATP hydrolysis by CysD. The sequence is that of Sulfate adenylyltransferase subunit 2 from Vibrio cholerae serotype O1 (strain ATCC 39315 / El Tor Inaba N16961).